The following is a 396-amino-acid chain: Tyrosine--tRNA ligase (396 aa).

The short motif at 43–52 (PTAPDIHLGH) is the 'HIGH' region element. The 'KMSKS' region motif lies at 227–231 (KMSKS). Residue K230 participates in ATP binding. One can recognise an S4 RNA-binding domain in the interval 335–395 (IGLATLLKEA…GKRKFARVTV (61 aa)).

This sequence belongs to the class-I aminoacyl-tRNA synthetase family. TyrS type 2 subfamily. As to quaternary structure, homodimer.

It localises to the cytoplasm. It catalyses the reaction tRNA(Tyr) + L-tyrosine + ATP = L-tyrosyl-tRNA(Tyr) + AMP + diphosphate + H(+). In terms of biological role, catalyzes the attachment of tyrosine to tRNA(Tyr) in a two-step reaction: tyrosine is first activated by ATP to form Tyr-AMP and then transferred to the acceptor end of tRNA(Tyr). The polypeptide is Tyrosine--tRNA ligase (Haemophilus ducreyi (strain 35000HP / ATCC 700724)).